Reading from the N-terminus, the 2085-residue chain is Protein MLP1 homolog (2085 aa).

Coiled coils occupy residues 44 to 367 (KIRE…SHDG), 399 to 513 (KATQ…HVLI), 568 to 630 (YELQ…RMKS), 675 to 1205 (ANEA…KRTQ), 1232 to 1667 (LRRE…LQQE), and 1744 to 1799 (EIEA…AAKE). The segment at 365–398 (HDGVPGSVPQTPRANGSLLARPSSPFGTPASLRG) is disordered. Residues 934–953 (AERLRPLPTPRAPAAAEQPS) are disordered. The short motif at 1159-1166 (ERRQRLEQ) is the Nuclear localization signal element. Residues 1482 to 1503 (LATATEKNTSLQQQLAASSTEQ) show a composition bias toward polar residues. 2 disordered regions span residues 1482–1514 (LATA…AAPS) and 1567–1591 (SGGD…DEER). A compositionally biased stretch (low complexity) spans 1504–1514 (PAAAPVSAAPS). The span at 1574-1584 (AETSVSAQPSA) shows a compositional bias: polar residues. A disordered region spans residues 1816–2085 (KPPAPAQAPA…GGGGGGGGNQ (270 aa)). Over residues 1817–1827 (PPAPAQAPAPA) the composition is skewed to pro residues. 3 stretches are compositionally biased toward low complexity: residues 1843-1858 (VAPA…QAPS), 1910-1974 (QAGQ…PVPA), and 1982-1994 (ARTA…AGPR). The segment covering 1995-2016 (GARGGRGGGFVGAGRGAGGAAG) has biased composition (gly residues). The span at 2028-2040 (GGATATAAAAAAA) shows a compositional bias: low complexity. 2 stretches are compositionally biased toward gly residues: residues 2041 to 2051 (GGAGGSAGAGN) and 2076 to 2085 (GGGGGGGGNQ).

As to quaternary structure, the nuclear pore complex (NPC) constitutes the exclusive means of nucleocytoplasmic transport. NPCs allow the passive diffusion of ions and small molecules and the active, nuclear transport receptor-mediated bidirectional transport of macromolecules such as proteins, RNAs, ribonucleoparticles (RNPs), and ribosomal subunits across the nuclear envelope. The 55-60 MDa NPC is composed of at least 28 different subunits: AMO1, ELYS, GLE1, GLE2, MLP1, NDC1, NIC96, NSP1, NUP133, NUP145, NUP152, NUP159, NUP170, NUP188, NUP192, NUP37, NUP49, NUP53, NUP56, NUP57, NUP82, NUP84, NUP85, POM152, POM33, POM34, SEC13 and SEH1. Due to its 8-fold rotational symmetry, all subunits are present with 8 copies or multiples thereof.

It localises to the nucleus. Its function is as follows. Involved in the structural and functional organization of perinuclear chromatin. Associates with the nuclear pore complex and form filamentous structures along the nuclear periphery. The chain is Protein MLP1 homolog (MLP1) from Chaetomium thermophilum (strain DSM 1495 / CBS 144.50 / IMI 039719) (Thermochaetoides thermophila).